Here is a 25-residue protein sequence, read N- to C-terminus: Antimicrobial peptide 2 (25 aa).

As to expression, expressed by the skin glands.

Its subcellular location is the secreted. Has very strong antibacterial activity against Gram-positive bacterium S.aureus and very weak activity against Gram-negative bacterium E.coli. The chain is Antimicrobial peptide 2 from Xenopus tropicalis (Western clawed frog).